A 124-amino-acid polypeptide reads, in one-letter code: Small ribosomal subunit protein bS6 (124 aa).

Belongs to the bacterial ribosomal protein bS6 family.

In terms of biological role, binds together with bS18 to 16S ribosomal RNA. In Campylobacter lari (strain RM2100 / D67 / ATCC BAA-1060), this protein is Small ribosomal subunit protein bS6.